Reading from the N-terminus, the 104-residue chain is Large ribosomal subunit protein bL21 (104 aa).

This sequence belongs to the bacterial ribosomal protein bL21 family. As to quaternary structure, part of the 50S ribosomal subunit. Contacts protein L20.

Its function is as follows. This protein binds to 23S rRNA in the presence of protein L20. The protein is Large ribosomal subunit protein bL21 of Thermotoga petrophila (strain ATCC BAA-488 / DSM 13995 / JCM 10881 / RKU-1).